The following is a 298-amino-acid chain: MAATLRELRGRIRSVGSIKKITKAQELIATSRIARAQVRLESARPYAVDITRMLTTLAYEAVLDHPLLVASATPKRAGVLVVSSDRGLCGAYNANVFRRSEELFSLLRAEGKTPILYVVGRKALNYYTFRNWGIAESWTGFSEQPKYENAAKIASTLVDVFMLGSSESDAGVDELHIVFTEFKSMLSQSTKARRMAPMVVEYVEESKLPRTLYSFEPDATTLFEALLPRYLTIRVYAAMLESAASELASRQRAMKSATDNADDLIKALTLEANRERQAQITQEISEIVGGANALANAR.

The protein belongs to the ATPase gamma chain family. In terms of assembly, F-type ATPases have 2 components, CF(1) - the catalytic core - and CF(0) - the membrane proton channel. CF(1) has five subunits: alpha(3), beta(3), gamma(1), delta(1), epsilon(1). CF(0) has three main subunits: a, b and c.

The protein resides in the cell membrane. Its function is as follows. Produces ATP from ADP in the presence of a proton gradient across the membrane. The gamma chain is believed to be important in regulating ATPase activity and the flow of protons through the CF(0) complex. The chain is ATP synthase gamma chain from Mycobacterium leprae (strain Br4923).